The chain runs to 578 residues: MAQRFITLILLLCSILLAPHSAQASLFGDNSSFGQKSSQSRFIPVDQAFAFDFRQQGDQLALSWQIHPDYYLYRQQIKIVPNNATFGAFTLPEGIAHRDEFYGEVAIFKQQLTLKIPITQAGERASVSVTYQGCAEAGFCYPPETRVVPLSAITAGSSAVTAPPIAAPATPAPAELPFSPLWALLIGIGIAFTPCVLPMYPLISAIILGREKPHSQRRILLLAIVYVQGMALTYTLLGLVVAAAGLQFQAALQHPYVLIGLSALFVLLALSMFGLYSLQLPSSLQTRLVQWSSSQRGGSLAGVFAMGALAGLICSPCTTAPLSAILLYIAQSGNMLAGGGTLYLYALGMGIPLVIVTLFGNKLLPRSGPWMQYVKEAFGFVILALPVFLLERVLGDVWGLRLWSLLAIAFFGWAFILSLKAHSGWARAFQLLLLAALLIAARPLQDWAFGSPTQQSEIKHLAFKQVADLPQLQAALAQAKGKPVMLDLYADWCVACKEFEKYTFSDEQVQRQLADTVLLQADVTANSAEHAALLKELNVLGLPTILFFDAPGNEIPAARVTGFMNASGFLQHLQNLPR.

An N-terminal signal peptide occupies residues 1–24; the sequence is MAQRFITLILLLCSILLAPHSAQA. Intrachain disulfides connect C134–C140 and C195–C317. 9 helical membrane-spanning segments follow: residues 183–203, 219–239, 256–276, 297–317, 318–338, 339–359, 370–390, 397–417, and 421–441; these read ALLI…YPLI, ILLL…LLGL, YVLI…FGLY, GGSL…CSPC, TTAP…MLAG, GGTL…VTLF, WMQY…VFLL, VWGL…AFIL, and AHSG…LIAA. One can recognise a Thioredoxin domain in the interval 438 to 578; that stretch reads LIAARPLQDW…FLQHLQNLPR (141 aa). The cysteines at positions 493 and 496 are disulfide-linked.

Belongs to the thioredoxin family. DsbD subfamily.

It localises to the cell inner membrane. The enzyme catalyses [protein]-dithiol + NAD(+) = [protein]-disulfide + NADH + H(+). The catalysed reaction is [protein]-dithiol + NADP(+) = [protein]-disulfide + NADPH + H(+). Required to facilitate the formation of correct disulfide bonds in some periplasmic proteins and for the assembly of the periplasmic c-type cytochromes. Acts by transferring electrons from cytoplasmic thioredoxin to the periplasm. This transfer involves a cascade of disulfide bond formation and reduction steps. This chain is Thiol:disulfide interchange protein DsbD, found in Yersinia enterocolitica serotype O:8 / biotype 1B (strain NCTC 13174 / 8081).